A 253-amino-acid polypeptide reads, in one-letter code: MANLMQRSLPLTTTRTPVLQFLRFRGKINIQRPKEPHYERARVVAVTQPKYPELPKARSCFQTRAERTKEQLENPYNEIIAREVRNWLNHSQLVAIFHLNSITADEIFRVRVQLHKQNLHLKSYGRKIIDQAVTGTPYEAIMPLFHSNHCIVFSPNQQQIGALLKITRRVPQMVLLGGIVEKTLLSRNELMAYAQMPNLQGAQAQLVQTLNLAAGQLVQHLQTHQANLVQVLDVHAKGNGDTNTNTTETADES.

Residues 1–24 (MANLMQRSLPLTTTRTPVLQFLRF) constitute a mitochondrion transit peptide.

This sequence belongs to the universal ribosomal protein uL10 family. Component of the mitochondrial ribosome large subunit (39S) which comprises a 16S rRNA and about 50 distinct proteins.

The protein localises to the mitochondrion. The sequence is that of Large ribosomal subunit protein uL10m (mRpL10) from Drosophila pseudoobscura pseudoobscura (Fruit fly).